Reading from the N-terminus, the 378-residue chain is MKYQGLLAIAGCIASASAVSVSGAAEGFAKGVTGGGSATAVYPSTTAELVSYLGDSEARVIVLTKTFDFTGTEGTTTATGCAPWGTASACQLAINQNDWCTNYEPDAPSVSVTYDNAGTLGITVKSNKSLLGSGSSGVIKGKGLRIVSGASNIIIQNIAITDINPKYVWGGDAITINNADMVWIDHVTTARIGRQHLVLGTSASNRVTISNNYFNGVSSYSATCDGYHYWGIYLDGSNDLVTMKGNYIYHFSGRSPKVQGNTLLHAVNNYWYDSSGHAFEIGSGGYVLAEGNVFQNIDTIVESPVDGQLFTSPDSTTNKVCSTYLGHVCQVNGFGSSGTFSQADTGFLSNFAGKNIASASAYTVVQSSVPSSAGQGKI.

The signal sequence occupies residues 1 to 18 (MKYQGLLAIAGCIASASA). 2 disulfides stabilise this stretch: cysteine 81–cysteine 100 and cysteine 90–cysteine 224. An N-linked (GlcNAc...) asparagine glycan is attached at asparagine 127. The active site involves arginine 254. Cysteine 321 and cysteine 329 are disulfide-bonded.

The protein belongs to the polysaccharide lyase 1 family.

The protein resides in the secreted. It carries out the reaction Eliminative cleavage of (1-&gt;4)-alpha-D-galacturonan methyl ester to give oligosaccharides with 4-deoxy-6-O-methyl-alpha-D-galact-4-enuronosyl groups at their non-reducing ends.. Pectinolytic enzymes consist of four classes of enzymes: pectin lyase, polygalacturonase, pectin methylesterase and rhamnogalacturonase. Among pectinolytic enzymes, pectin lyase is the most important in depolymerization of pectin, since it cleaves internal glycosidic bonds of highly methylated pectins. The polypeptide is Probable pectin lyase A (pelA) (Neosartorya fischeri (strain ATCC 1020 / DSM 3700 / CBS 544.65 / FGSC A1164 / JCM 1740 / NRRL 181 / WB 181) (Aspergillus fischerianus)).